The primary structure comprises 233 residues: uncharacterized protein (233 aa).

The next 3 helical transmembrane spans lie at 78-98 (FCLI…PVMY), 113-133 (FITC…LFKL), and 188-208 (FLLI…YGTI).

It is found in the membrane. This is an uncharacterized protein from Saccharomyces cerevisiae (strain ATCC 204508 / S288c) (Baker's yeast).